The chain runs to 92 residues: Small integral membrane protein 12 (92 aa).

Residues 15–34 (YVTFPVAFVVGAVGYHLEWF) form a helical membrane-spanning segment.

It belongs to the SMIM12 family.

The protein resides in the membrane. In Mus musculus (Mouse), this protein is Small integral membrane protein 12 (Smim12).